Reading from the N-terminus, the 321-residue chain is UDP-N-acetyl-alpha-D-glucosaminuronate decarboxylase (321 aa).

NAD(+) contacts are provided by Gly12, Phe13, Ile14, Asp33, Asn34, Tyr36, Gly38, Leu76, Thr95, Ala117, Tyr148, and Lys152. Tyr148 (proton acceptor) is an active-site residue.

The protein belongs to the NAD(P)-dependent epimerase/dehydratase family. In terms of assembly, homodimer. The cofactor is NAD(+).

The enzyme catalyses UDP-2-acetamido-2-deoxy-alpha-D-glucuronate + H(+) = UDP-N-acetyl-alpha-D-xylosamine + CO2. Activity is completely inhibited by NADH but not by NADPH. Decarboxylase involved in the biosynthesis of the nucleotide-sugar UDP-N-acetylxylosamine (UDP-XylNAc). Catalyzes the NAD-dependent decarboxylation of UDP-N-acetylglucosaminuronic acid (UDP-GlcNAcA) to UDP-XylNAc. Cannot use other UDP-uronates, such as UDP-glucuronic acid (UDP-GlcA) and UDP-galacturonic acid (UDP-GalA). In Bacillus cytotoxicus (strain DSM 22905 / CIP 110041 / 391-98 / NVH 391-98), this protein is UDP-N-acetyl-alpha-D-glucosaminuronate decarboxylase.